A 521-amino-acid polypeptide reads, in one-letter code: C-22 sterol desaturase erg5 (521 aa).

A helical membrane pass occupies residues 30-50 (AVLNGFTFWKALATLFFAAVI).

This sequence belongs to the cytochrome P450 family. Heme is required as a cofactor.

The protein localises to the endoplasmic reticulum membrane. The enzyme catalyses 5-dehydroepisterol + NADPH + O2 + H(+) = ergosta-5,7,22,24(28)-tetraen-3beta-ol + NADP(+) + 2 H2O. It participates in steroid metabolism; ergosterol biosynthesis. In terms of biological role, C-22 sterol desaturase; part of the third module of ergosterol biosynthesis pathway that includes the late steps of the pathway. Erg5 converts 5-dehydroepisterol into ergosta-5,7,22,24(28)-tetraen-3beta-ol by forming the C-22(23) double bond in the sterol side chain. The third module or late pathway involves the ergosterol synthesis itself through consecutive reactions that mainly occur in the endoplasmic reticulum (ER) membrane. Firstly, the squalene synthase erg9 catalyzes the condensation of 2 farnesyl pyrophosphate moieties to form squalene, which is the precursor of all steroids. Squalene synthase is crucial for balancing the incorporation of farnesyl diphosphate (FPP) into sterol and nonsterol isoprene synthesis. Secondly, squalene is converted into lanosterol by the consecutive action of the squalene epoxidase erg1 and the lanosterol synthase erg7. Then, the delta(24)-sterol C-methyltransferase erg6 methylates lanosterol at C-24 to produce eburicol. Eburicol is the substrate of the sterol 14-alpha demethylase encoded by cyp51A and cyp51B, to yield 4,4,24-trimethyl ergosta-8,14,24(28)-trienol. The C-14 reductase erg24 then reduces the C14=C15 double bond which leads to 4,4-dimethylfecosterol. A sequence of further demethylations at C-4, involving the C-4 demethylation complex containing the C-4 methylsterol oxidases erg25A or erg25B, the sterol-4-alpha-carboxylate 3-dehydrogenase erg26 and the 3-keto-steroid reductase erg27, leads to the production of fecosterol via 4-methylfecosterol. The C-8 sterol isomerase erg2 then catalyzes the reaction which results in unsaturation at C-7 in the B ring of sterols and thus converts fecosterol to episterol. The sterol-C5-desaturase erg3B then catalyzes the introduction of a C-5 double bond in the B ring to produce 5-dehydroepisterol. The 2 other sterol-C5-desaturases, erg3A and erg3C, seem to be less important in ergosterol biosynthesis. The C-22 sterol desaturase erg5 further converts 5-dehydroepisterol into ergosta-5,7,22,24(28)-tetraen-3beta-ol by forming the C-22(23) double bond in the sterol side chain. Finally, ergosta-5,7,22,24(28)-tetraen-3beta-ol is substrate of the C-24(28) sterol reductases erg4A and erg4B to produce ergosterol. Possible alternative sterol biosynthetic pathways might exist from fecosterol to ergosterol, depending on the activities of the erg3 isoforms. The protein is C-22 sterol desaturase erg5 of Aspergillus fumigatus (strain ATCC MYA-4609 / CBS 101355 / FGSC A1100 / Af293) (Neosartorya fumigata).